The sequence spans 1169 residues: Pesticidal crystal protein Cry8Ba (1169 aa).

The tract at residues 1–26 (MSPNNQNEYEIIDATPSTSVSNDSNR) is disordered. Over residues 15–25 (TPSTSVSNDSN) the composition is skewed to polar residues.

This sequence belongs to the delta endotoxin family.

In terms of biological role, promotes colloidosmotic lysis by binding to the midgut epithelial cells of insects. Active on various scarabaeid beetles. This Bacillus thuringiensis serovar kumamotoensis protein is Pesticidal crystal protein Cry8Ba (cry8Ba).